The following is a 752-amino-acid chain: Catalase-peroxidase (752 aa).

Positions 1 to 21 are disordered; it reads MSNESKCPFHQTAGGGTTNRD. Residues 91–245 constitute a cross-link (tryptophyl-tyrosyl-methioninium (Trp-Tyr) (with M-271)); it reads WHSAGTYRIG…LAAVQMGLIY (155 aa). His-92 (proton acceptor) is an active-site residue. The disordered stretch occupies residues 204 to 228; that stretch reads QAPGQGDLVAEPAKHGEEQNRDLSA. A compositionally biased stretch (basic and acidic residues) spans 215–228; it reads PAKHGEEQNRDLSA. The segment at residues 245-271 is a cross-link (tryptophyl-tyrosyl-methioninium (Tyr-Met) (with W-91)); the sequence is YVNPEGPEGNPDPVASGKDIRETFGRM. His-286 is a binding site for heme. Positions 366 to 391 are disordered; that stretch reads AHQWQPKEGKGAGTVPDAHDPSKRHA.

This sequence belongs to the peroxidase family. Peroxidase/catalase subfamily. As to quaternary structure, homodimer or homotetramer. The cofactor is heme b. In terms of processing, formation of the three residue Trp-Tyr-Met cross-link is important for the catalase, but not the peroxidase activity of the enzyme.

The catalysed reaction is H2O2 + AH2 = A + 2 H2O. It carries out the reaction 2 H2O2 = O2 + 2 H2O. Its function is as follows. Bifunctional enzyme with both catalase and broad-spectrum peroxidase activity. This Pseudomonas putida (strain W619) protein is Catalase-peroxidase.